An 836-amino-acid polypeptide reads, in one-letter code: Protein-glutamine gamma-glutamyltransferase K (836 aa).

Over residues 1-33 (MDGPRSDMGRSDVSRSDMSRSDMGRSDMGRSDV) the composition is skewed to basic and acidic residues. Disordered stretches follow at residues 1–68 (MDGP…SRGG) and 89–125 (DDWG…DGTI). Threonine 46 carries the post-translational modification Phosphothreonine. A phosphoserine mark is found at serine 48, serine 98, and serine 112. Basic and acidic residues predominate over residues 89 to 112 (DDWGREPSDSRDRGSSSRGGRPDS). Active-site residues include cysteine 397, histidine 456, and aspartate 479. Ca(2+)-binding residues include asparagine 519, aspartate 521, glutamate 568, and glutamate 573. A Phosphoserine modification is found at serine 824.

The protein belongs to the transglutaminase superfamily. Transglutaminase family. In terms of assembly, interacts with PLAAT4. Ca(2+) is required as a cofactor. Palmitoylated. In terms of processing, the membrane anchorage region possesses a cluster of five cysteines within which fatty acid(s) may become thioester-linked. It is subject to phorbol ester-stimulated phosphorylation and is hypersensitive to proteolysis, which releases the enzyme in a soluble form. Post-translationally, tyrosine-phosphorylated.

Its subcellular location is the membrane. The enzyme catalyses L-glutaminyl-[protein] + L-lysyl-[protein] = [protein]-L-lysyl-N(6)-5-L-glutamyl-[protein] + NH4(+). Inhibited by retinoic acid, but phorbol ester treatment activates it. Catalyzes the cross-linking of proteins and the conjugation of polyamines to proteins. Responsible for cross-linking epidermal proteins during formation of the stratum corneum. Involved in cell proliferation. The protein is Protein-glutamine gamma-glutamyltransferase K (TGM1) of Oryctolagus cuniculus (Rabbit).